A 276-amino-acid chain; its full sequence is Undecaprenyl-diphosphatase 2 (276 aa).

Transmembrane regions (helical) follow at residues 1–21 (MSLW…LFPV), 44–64 (QLLP…LWYF), 87–107 (GHLM…GLLL), 114–134 (VFHD…LLWL), 150–170 (MTFK…IPGF), 190–210 (AAEF…VLEL), 222–242 (DALL…RFLM), and 251–271 (LASF…WFML).

The protein belongs to the UppP family.

The protein localises to the cell inner membrane. The catalysed reaction is di-trans,octa-cis-undecaprenyl diphosphate + H2O = di-trans,octa-cis-undecaprenyl phosphate + phosphate + H(+). In terms of biological role, catalyzes the dephosphorylation of undecaprenyl diphosphate (UPP). Confers resistance to bacitracin. This is Undecaprenyl-diphosphatase 2 from Burkholderia orbicola (strain AU 1054).